The chain runs to 158 residues: Eukaryotic translation initiation factor 5A-1 (158 aa).

The segment covering 1–10 (MSDEEHHFES) has biased composition (basic and acidic residues). The segment at 1-21 (MSDEEHHFESSDAGASKTYPQ) is disordered. Ser2 carries the phosphoserine modification. Lys51 bears the Hypusine mark.

The protein belongs to the eIF-5A family. In terms of processing, lys-51 undergoes hypusination, a unique post-translational modification that consists in the addition of a butylamino group from spermidine to lysine side chain, leading to the formation of the unusual amino acid hypusine. eIF-5As are the only known proteins to undergo this modification, which is essential for their function. In terms of tissue distribution, expressed in leaf vasculature and inflorescence stems. Present in xylem tissue but not in phloem, and in developing vessel members, but not in mature vessels members. Detected in anthers.

Its function is as follows. Translation factor that promotes translation elongation and termination, particularly upon ribosome stalling at specific amino acid sequence contexts. Binds between the exit (E) and peptidyl (P) site of the ribosome and promotes rescue of stalled ribosome: specifically required for efficient translation of polyproline-containing peptides as well as other motifs that stall the ribosome. Acts as a ribosome quality control (RQC) cofactor by joining the RQC complex to facilitate peptidyl transfer during CAT tailing step. Involved in xylogenesis. The chain is Eukaryotic translation initiation factor 5A-1 (ELF5A-1) from Arabidopsis thaliana (Mouse-ear cress).